We begin with the raw amino-acid sequence, 127 residues long: Large ribosomal subunit protein bL12 (127 aa).

The segment at 94-114 (VDGAPSTLKEAASKEEAEEAK) is disordered. Basic and acidic residues predominate over residues 104–114 (AASKEEAEEAK).

This sequence belongs to the bacterial ribosomal protein bL12 family. Homodimer. Part of the ribosomal stalk of the 50S ribosomal subunit. Forms a multimeric L10(L12)X complex, where L10 forms an elongated spine to which 2 to 4 L12 dimers bind in a sequential fashion. Binds GTP-bound translation factors.

Forms part of the ribosomal stalk which helps the ribosome interact with GTP-bound translation factors. Is thus essential for accurate translation. This is Large ribosomal subunit protein bL12 from Nitratidesulfovibrio vulgaris (strain ATCC 29579 / DSM 644 / CCUG 34227 / NCIMB 8303 / VKM B-1760 / Hildenborough) (Desulfovibrio vulgaris).